The primary structure comprises 133 residues: MSEEGFMLAVLKGIPLIQDIRAEGNSRSWIMTIDGHPARGEIFSEAFSISLFLNDLESLPKPCLAYVTLLLAAHPDVHDYAIQLTADGGWLNGYYTTSSSSELIAIEIEKHLALTCILKNVIRNHHKLYSGGV.

Interacts with the mammalian NIPSNAP3A and HOOK3 proteins in infected cells.

It localises to the secreted. Its subcellular location is the cytoplasm. Virulence protein that plays a central role in mammalian macrophage infection, by inhibiting phagosome-lysosome fusion and cellular trafficking, including trafficking of organelles that are devoid of Salmonella. May act by disrupting the function of the mammalian HOOK3 protein, a protein involved in the cellular traffic. Also required for actin ADP-ribosylase SpvB activity. The chain is Salmonella pathogenicity island 2 protein C (spiC) from Salmonella typhimurium (strain 14028s / SGSC 2262).